The sequence spans 479 residues: Probable xyloglucan galactosyltransferase GT15 (479 aa).

The Cytoplasmic segment spans residues 1-20 (MKNNNSSSVSIENHPWKKKP). The chain crosses the membrane as a helical; Signal-anchor for type II membrane protein span at residues 21–40 (TTLLLFLSLLSISLLLLRLS). The Lumenal portion of the chain corresponds to 41-479 (QDKIILITTT…GIRRNEFKTD (439 aa)). Asn155, Asn242, Asn285, and Asn391 each carry an N-linked (GlcNAc...) asparagine glycan.

The protein belongs to the glycosyltransferase 47 family. Expressed in roots, hypocotyls, cotyledons, leaves, stems and sepals.

It localises to the golgi apparatus membrane. In terms of biological role, functions in xyloglucan synthesis by adding side chains to the xylosylated glucan backbone. Involved in the galactosylation of hemicellulose xyloglucan. The polypeptide is Probable xyloglucan galactosyltransferase GT15 (Arabidopsis thaliana (Mouse-ear cress)).